The chain runs to 342 residues: Heat-inducible transcription repressor HrcA (342 aa).

Belongs to the HrcA family.

Functionally, negative regulator of class I heat shock genes (grpE-dnaK-dnaJ and groELS operons). Prevents heat-shock induction of these operons. This Methylibium petroleiphilum (strain ATCC BAA-1232 / LMG 22953 / PM1) protein is Heat-inducible transcription repressor HrcA.